Reading from the N-terminus, the 333-residue chain is NADH-quinone oxidoreductase subunit H (333 aa).

A run of 8 helical transmembrane segments spans residues 15 to 35 (FFIF…FVTY), 88 to 108 (FILA…VIPF), 117 to 137 (IGVG…GVVT), 159 to 179 (ISYE…AGSL), 191 to 211 (VWYI…AVAE), 239 to 259 (WAFF…LITV), 274 to 296 (IPGA…WFRV), and 313 to 333 (VLLP…ELFF).

The protein belongs to the complex I subunit 1 family. In terms of assembly, NDH-1 is composed of 14 different subunits. Subunits NuoA, H, J, K, L, M, N constitute the membrane sector of the complex.

The protein localises to the cell membrane. The enzyme catalyses a quinone + NADH + 5 H(+)(in) = a quinol + NAD(+) + 4 H(+)(out). Functionally, NDH-1 shuttles electrons from NADH, via FMN and iron-sulfur (Fe-S) centers, to quinones in the respiratory chain. The immediate electron acceptor for the enzyme in this species is believed to be ubiquinone. Couples the redox reaction to proton translocation (for every two electrons transferred, four hydrogen ions are translocated across the cytoplasmic membrane), and thus conserves the redox energy in a proton gradient. This subunit may bind ubiquinone. The chain is NADH-quinone oxidoreductase subunit H from Bacillus anthracis (strain A0248).